Reading from the N-terminus, the 530-residue chain is TNF receptor-associated factor 6 (530 aa).

The interval Met-1 to Ile-362 is interaction with TAX1BP1. The segment at Cys-70–Asn-109 adopts an RING-type zinc-finger fold. Lys-124 is covalently cross-linked (Glycyl lysine isopeptide (Lys-Gly) (interchain with G-Cter in SUMO); alternate). Lys-124 participates in a covalent cross-link: Glycyl lysine isopeptide (Lys-Gly) (interchain with G-Cter in ubiquitin); alternate. Residue Lys-142 forms a Glycyl lysine isopeptide (Lys-Gly) (interchain with G-Cter in SUMO) linkage. 2 consecutive TRAF-type zinc fingers follow at residues Asp-150–Glu-202 and Ile-203–Ala-259. Residues Glu-299–Gln-356 adopt a coiled-coil conformation. Lys-327 participates in a covalent cross-link: Glycyl lysine isopeptide (Lys-Gly) (interchain with G-Cter in ubiquitin). The MATH domain occupies Asn-358–Val-507. The segment at Trp-363–Val-530 is interaction with TANK. A Glycyl lysine isopeptide (Lys-Gly) (interchain with G-Cter in SUMO) cross-link involves residue Lys-461.

It belongs to the TNF receptor-associated factor family. A subfamily. As to quaternary structure, homotrimer. Homooligomer. N-terminal region is dimeric while C-terminal region is trimeric; maybe providing a mode of oligomerization. Upon IL1B treatment, forms a complex with PELI1, IRAK1, IRAK4 and MYD88; this complex recruits MAP3K7/TAK1, TAB1 and TAB2 to mediate NF-kappa-B activation. Direct binding of SMAD6 to PELI1 prevents the complex formation and hence negatively regulates IL1R-TLR signaling and eventually NF-kappa-B-mediated gene expression. Binds to TNFRSF5/CD40 and TNFRSF11A/RANK. Associates with NGFR, TNFRSF17, IRAK2, IRAK3, PELI2, PELI3, RIPK2, MAP3K1, MAP3K5, MAP3K14, CSK, TRAF, TRAF-interacting protein TRIP and TNF receptor associated protein TDP2. Binds UBE2V1. Interacts with MAVS/IPS1. Interacts with TAX1BP1; this interaction mediates deubiquitination of TRAF6 and inhibition of NF-kappa-B activation. Interacts with IL17R. Interacts with SQSTM1 bridging NTRK1 and NGFR. Forms a ternary complex with SQSTM1 and PRKCZ. Interacts with IL1RL1. Interacts with AJUBA. Interacts with TRAFD1. Interacts with TICAM2. Interacts with ZFAND5. Interacts with ARRB1 and ARRB2. Interacts with MAP3K7 and TAB1/MAP3K7IP1; during IL-1 signaling. Interacts with UBE2N. Interacts with TGFBR1, HDAC1 and RANGAP1. Interacts with AKT1, AKT2 and AKT3. Interacts (via TRAF domains) with NUMBL (via C-terminal). Interacts (via TRAF domains) with DYNC2I2 (via WD domains). Interacts with RBCK1. Interacts with LIMD1 (via LIM domains). Interacts with RSAD2/viperin. Interacts with IFIT3 (via N-terminus). Interacts (via C-terminus) with EIF2AK2/PKR (via the kinase catalytic domain). Interacts with CARD14. Interacts with CD40 and MAP3K8; the interaction is required for ERK activation. Interacts with TICAM1 and this interaction is enhanced in the presence of WDFY1. Interacts with TANK; this interaction increases in response to DNA damage. Interacts with USP10; this interaction increases in response to DNA damage. Interacts with ZC3H12A; this interaction increases in response to DNA damage and is stimulated by TANK. Interacts with WDFY3. Interacts with TRIM13. Interacts with GPS2. Interacts (via C-terminus) with SASH1. Interacts with LRRC19. Interacts with IL17RA and TRAF3IP2. Interacts with TOMM70. Interacts with AMBRA1; interaction is required to mediate 'Lys-63'-linked ubiquitination of ULK1. Interacts with CRBN; this interaction inhibits TLR4-mediated signaling by preventing TRAF6-mediated ubiquitination of ECSIT. In terms of assembly, (Microbial infection) Interacts (via N-terminal RING domain) with Toxoplasma gondii GRA7; the interaction plays a role in GRA7-induced pro-inflammatory cytokine production in mouse macrophages. Sumoylated on Lys-124, Lys-142 and Lys-461 with SUMO1. Post-translationally, polyubiquitinated on Lys-124 by TRAF3IP2; after cell stimulation with IL17A. Polyubiquitinated; after cell stimulation with IL1B or TGFB. This ligand-induced cell stimulation leads to dimerization/oligomerization of TRAF6 molecules, followed by auto-ubiquitination which involves UBE2N and UBE2V1 and leads to TRAF6 activation. This 'Lys-63' site-specific poly-ubiquitination appears to be associated with the activation of signaling molecules. Endogenous autoubiquitination occurs only for the cytoplasmic form. Deubiquitinated by USP10 in a TANK-dependent manner, leading to the negative regulation of NF-kappa-B signaling upon DNA damage. LRRC19 induces 'Lys-63' ubiquitination. Ubiquitinated at Lys-327 by the SCF(FBXL2) complex, leading to its degradation by the proteasome. Highly expressed in brain, lung, liver, skeletal muscle, and kidney; lower expression in heart, spleen, and testis.

Its subcellular location is the cytoplasm. It localises to the cell cortex. The protein localises to the nucleus. It is found in the lipid droplet. The catalysed reaction is S-ubiquitinyl-[E2 ubiquitin-conjugating enzyme]-L-cysteine + [acceptor protein]-L-lysine = [E2 ubiquitin-conjugating enzyme]-L-cysteine + N(6)-ubiquitinyl-[acceptor protein]-L-lysine.. Its pathway is protein modification; protein ubiquitination. In terms of biological role, E3 ubiquitin ligase that, together with UBE2N and UBE2V1, mediates the synthesis of 'Lys-63'-linked-polyubiquitin chains conjugated to proteins, such as ECSIT, IKBKG, IRAK1, AKT1 and AKT2. Also mediates ubiquitination of free/unanchored polyubiquitin chain that leads to MAP3K7 activation. Leads to the activation of NF-kappa-B and JUN. Seems to also play a role in dendritic cells (DCs) maturation and/or activation. Represses c-Myb-mediated transactivation, in B-lymphocytes. Adapter protein that seems to play a role in signal transduction initiated via TNF receptor, IL-1 receptor and IL-17 receptor. Regulates osteoclast differentiation by mediating the activation of adapter protein complex 1 (AP-1) and NF-kappa-B, in response to RANK-L stimulation. Together with MAP3K8, mediates CD40 signals that activate ERK in B-cells and macrophages, and thus may play a role in the regulation of immunoglobulin production. Acts as a regulator of the JNK and NF-kappa-B signaling pathways by initiating assembly of heterotypic 'Lys-63'-/'Lys-48'-linked branched ubiquitin chains that are then recognized by TAB2: TRAF6 catalyzes initial 'Lys-63'-linked-polyubiquitin chains that are then branched via 'Lys-48'-linked polyubiquitin by HUWE1. 'Lys-63'-/'Lys-48'-linked branched ubiquitin chains protect 'Lys-63'-linkages from CYLD deubiquitination. Also participates in the TCR signaling by ubiquitinating LAT. The polypeptide is TNF receptor-associated factor 6 (Traf6) (Mus musculus (Mouse)).